A 716-amino-acid polypeptide reads, in one-letter code: Translation initiation factor IF-2 (716 aa).

Positions 52–135 (QQESNNNTKQ…PAAEPKEMPS (84 aa)) are disordered. Low complexity predominate over residues 56–125 (NNNTKQNTQN…KNNKGNKNNK (70 aa)). In terms of domain architecture, tr-type G spans 218–387 (ERPAVVTIMG…GLVAEVQELK (170 aa)). Residues 227 to 234 (GHVDHGKT) are G1. 227-234 (GHVDHGKT) serves as a coordination point for GTP. Residues 252–256 (GITQH) form a G2 region. A G3 region spans residues 273–276 (DTPG). Residues 273–277 (DTPGH) and 327–330 (NKID) contribute to the GTP site. Positions 327–330 (NKID) are G4. The G5 stretch occupies residues 363 to 365 (SAL).

The protein belongs to the TRAFAC class translation factor GTPase superfamily. Classic translation factor GTPase family. IF-2 subfamily.

Its subcellular location is the cytoplasm. In terms of biological role, one of the essential components for the initiation of protein synthesis. Protects formylmethionyl-tRNA from spontaneous hydrolysis and promotes its binding to the 30S ribosomal subunits. Also involved in the hydrolysis of GTP during the formation of the 70S ribosomal complex. The protein is Translation initiation factor IF-2 of Staphylococcus haemolyticus (strain JCSC1435).